Reading from the N-terminus, the 625-residue chain is Glucose dehydrogenase [FAD, quinone] (625 aa).

An N-terminal signal peptide occupies residues 1-42 (MATSPSSCDCLVGVPTGPTLASTCGGSAFMLFMGLLEVFIRS). 66–95 (DFIVIGGGSAGSVVASRLSEVPQWKVLLIE) is a binding site for FAD. Catalysis depends on His-544, which acts as the Proton acceptor. Residue Sec-613 is a non-standard amino acid, selenocysteine.

The protein belongs to the GMC oxidoreductase family. It depends on FAD as a cofactor.

The protein resides in the secreted. It carries out the reaction a quinone + D-glucose = D-glucono-1,5-lactone + a quinol. The polypeptide is Glucose dehydrogenase [FAD, quinone] (Gld) (Drosophila pseudoobscura pseudoobscura (Fruit fly)).